Reading from the N-terminus, the 346-residue chain is N-acetyl-gamma-glutamyl-phosphate reductase (346 aa).

Residue cysteine 149 is part of the active site.

Belongs to the NAGSA dehydrogenase family. Type 1 subfamily.

The protein resides in the cytoplasm. The catalysed reaction is N-acetyl-L-glutamate 5-semialdehyde + phosphate + NADP(+) = N-acetyl-L-glutamyl 5-phosphate + NADPH + H(+). It functions in the pathway amino-acid biosynthesis; L-arginine biosynthesis; N(2)-acetyl-L-ornithine from L-glutamate: step 3/4. In terms of biological role, catalyzes the NADPH-dependent reduction of N-acetyl-5-glutamyl phosphate to yield N-acetyl-L-glutamate 5-semialdehyde. The polypeptide is N-acetyl-gamma-glutamyl-phosphate reductase (Geobacter metallireducens (strain ATCC 53774 / DSM 7210 / GS-15)).